The following is a 238-amino-acid chain: RAD9, HUS1, RAD1-interacting nuclear orphan protein 1 (238 aa).

Residues 1 to 10 (MPPRKKRRQP) are compositionally biased toward basic residues. Residues 1 to 31 (MPPRKKRRQPSQKAPLLFHQQPLEGPKHSCA) are disordered. Residue S51 is modified to Phosphoserine; by PLK1. The RAD1-binding motif signature appears at 55-61 (SWVSPDF). Positions 74–105 (KHQNRARHSSRKPTTSKFPHLTFESPQSSSSE) are disordered. Residues 75–84 (HQNRARHSSR) show a composition bias toward basic residues. The D-box motif lies at 125 to 132 (RRPLVPVL). Residues 174–178 (QKENS) carry the KEN box motif.

Interacts (when phosphorylated by PLK1) with POLQ; promoting POLQ recruitment to DNA damage sites. Interacts with RAD1; interaction is direct and promotes association with the 9-1-1 (RAD9-RAD1-HUS1) complex. Interacts with RAD18. Interacts with TOPBP1. Interacts with UBE2N. Phosphorylated at Ser-51 by PLK1, promoting interaction with polymerase theta (POLQ). In terms of processing, ubiquitinated and degraded by the APC/C complex upon mitotic exit. Weakly expressed in testis, prostate, ovary, thymus and small intestine. Expressed strongly in breast cancer cells.

The protein resides in the nucleus. It localises to the chromosome. Functionally, involved in microhomology-mediated end-joining (MMEJ) DNA repair by promoting recruitment of polymerase theta (POLQ) to DNA damage sites during mitosis. MMEJ is an alternative non-homologous end-joining (NHEJ) machinery that takes place during mitosis to repair double-strand breaks in DNA that originate in S-phase. Accumulates in M-phase; following phosphorylation by PLK1, interacts with POLQ, enabling its recruitment to double-strand breaks for subsequent repair. Also involved in the DNA damage response (DDR) signaling in response to genotoxic stresses such as ionizing radiation (IR) during the S phase. Recruited to sites of DNA damage through interaction with the 9-1-1 cell-cycle checkpoint response complex and TOPBP1 in a ATR-dependent manner. Required for the progression of the G1 to S phase transition. Plays a role in the stimulation of CHEK1 phosphorylation. This is RAD9, HUS1, RAD1-interacting nuclear orphan protein 1 from Homo sapiens (Human).